The following is a 153-amino-acid chain: Small ribosomal subunit protein bS6 (153 aa).

The interval 97 to 153 (EEGPSAMMRKADRDRERDDRGGGFRGERDGGGFRGDRGDRGDRGPRRPRDEETADEE) is disordered. Residues 105–147 (RKADRDRERDDRGGGFRGERDGGGFRGDRGDRGDRGPRRPRDE) are compositionally biased toward basic and acidic residues.

The protein belongs to the bacterial ribosomal protein bS6 family.

Functionally, binds together with bS18 to 16S ribosomal RNA. This Bradyrhizobium sp. (strain BTAi1 / ATCC BAA-1182) protein is Small ribosomal subunit protein bS6.